Reading from the N-terminus, the 195-residue chain is Putative deoxynucleoside kinase (195 aa).

In Frog virus 3 (isolate Goorha) (FV-3), this protein is Putative deoxynucleoside kinase.